The chain runs to 504 residues: Anaerobic nitric oxide reductase transcription regulator NorR (504 aa).

D57 is subject to 4-aspartylphosphate. The 230-residue stretch at 187 to 416 folds into the Sigma-54 factor interaction domain; it reads MIGLSPGMTQ…LEHAIHRAVV (230 aa). ATP is bound by residues 215-222 and 278-287; these read GETGTGKE and ADNGTLFLDE. The segment at residues 479–498 is a DNA-binding region (H-T-H motif); that stretch reads WAACARMLETDVANLHRLAK.

Its pathway is nitrogen metabolism; nitric oxide reduction. Required for the expression of anaerobic nitric oxide (NO) reductase, acts as a transcriptional activator for at least the norVW operon. Activation also requires sigma-54. The polypeptide is Anaerobic nitric oxide reductase transcription regulator NorR (Shigella dysenteriae serotype 1 (strain Sd197)).